A 117-amino-acid chain; its full sequence is NADPH-dependent 7-cyano-7-deazaguanine reductase (117 aa).

Catalysis depends on cysteine 31, which acts as the Thioimide intermediate. Aspartate 38 functions as the Proton donor in the catalytic mechanism. Residues 53-55 (IEL) and 72-73 (YE) contribute to the substrate site.

The protein belongs to the GTP cyclohydrolase I family. QueF type 1 subfamily.

The protein localises to the cytoplasm. It catalyses the reaction 7-aminomethyl-7-carbaguanine + 2 NADP(+) = 7-cyano-7-deazaguanine + 2 NADPH + 3 H(+). The protein operates within tRNA modification; tRNA-queuosine biosynthesis. Its function is as follows. Catalyzes the NADPH-dependent reduction of 7-cyano-7-deazaguanine (preQ0) to 7-aminomethyl-7-deazaguanine (preQ1). This chain is NADPH-dependent 7-cyano-7-deazaguanine reductase, found in Chlorobaculum tepidum (strain ATCC 49652 / DSM 12025 / NBRC 103806 / TLS) (Chlorobium tepidum).